We begin with the raw amino-acid sequence, 235 residues long: Sugar fermentation stimulation protein homolog (235 aa).

Belongs to the SfsA family.

The sequence is that of Sugar fermentation stimulation protein homolog from Pseudomonas paraeruginosa (strain DSM 24068 / PA7) (Pseudomonas aeruginosa (strain PA7)).